A 447-amino-acid chain; its full sequence is Tubulin beta chain (447 aa).

Residues glutamine 11, glutamate 69, serine 138, glycine 142, threonine 143, glycine 144, asparagine 204, and asparagine 226 each contribute to the GTP site. Glutamate 69 contacts Mg(2+). A disordered region spans residues tyrosine 425 to glutamate 447. Over residues glutamate 432–glutamate 447 the composition is skewed to acidic residues.

This sequence belongs to the tubulin family. As to quaternary structure, dimer of alpha and beta chains. A typical microtubule is a hollow water-filled tube with an outer diameter of 25 nm and an inner diameter of 15 nM. Alpha-beta heterodimers associate head-to-tail to form protofilaments running lengthwise along the microtubule wall with the beta-tubulin subunit facing the microtubule plus end conferring a structural polarity. Microtubules usually have 13 protofilaments but different protofilament numbers can be found in some organisms and specialized cells. The cofactor is Mg(2+).

It localises to the cytoplasm. It is found in the cytoskeleton. In terms of biological role, tubulin is the major constituent of microtubules, a cylinder consisting of laterally associated linear protofilaments composed of alpha- and beta-tubulin heterodimers. Microtubules grow by the addition of GTP-tubulin dimers to the microtubule end, where a stabilizing cap forms. Below the cap, tubulin dimers are in GDP-bound state, owing to GTPase activity of alpha-tubulin. In Botryotinia fuckeliana (Noble rot fungus), this protein is Tubulin beta chain (tubA).